The following is a 445-amino-acid chain: Dolichyl-diphosphooligosaccharide--protein glycosyltransferase 48 kDa subunit (445 aa).

A signal peptide spans 1–32 (MRRRRKMEAGAAARAWSLLWLLLPLLGPVCAS). The Lumenal segment spans residues 33–415 (GPRTLVLLDN…QYERFIPSAY (383 aa)). A helical transmembrane segment spans residues 416-436 (PYYASAFSMMLGLFIFSTVFL). Over 437 to 445 (HMKEKEKSD) the chain is Cytoplasmic.

The protein belongs to the DDOST 48 kDa subunit family. In terms of assembly, component of the oligosaccharyltransferase (OST) complex. OST exists in two different complex forms which contain common core subunits RPN1, RPN2, OST48, OST4, DAD1 and TMEM258, either STT3A or STT3B as catalytic subunits, and form-specific accessory subunits. STT3A complex assembly occurs through the formation of 3 subcomplexes. Subcomplex 1 contains RPN1 and TMEM258, subcomplex 2 contains the STT3A-specific subunits STT3A, DC2/OSTC, and KCP2 as well as the core subunit OST4, and subcomplex 3 contains RPN2, DAD1, and OST48. The STT3A complex can form stable complexes with the Sec61 complex or with both the Sec61 and TRAP complexes. Interacts with SMIM22.

The protein localises to the endoplasmic reticulum. The protein resides in the endoplasmic reticulum membrane. Its pathway is protein modification; protein glycosylation. Its function is as follows. Subunit of the oligosaccharyl transferase (OST) complex that catalyzes the initial transfer of a defined glycan (Glc(3)Man(9)GlcNAc(2) in eukaryotes) from the lipid carrier dolichol-pyrophosphate to an asparagine residue within an Asn-X-Ser/Thr consensus motif in nascent polypeptide chains, the first step in protein N-glycosylation. N-glycosylation occurs cotranslationally and the complex associates with the Sec61 complex at the channel-forming translocon complex that mediates protein translocation across the endoplasmic reticulum (ER). All subunits are required for a maximal enzyme activity. Required for the assembly of both SST3A- and SS3B-containing OST complexes. In Canis lupus familiaris (Dog), this protein is Dolichyl-diphosphooligosaccharide--protein glycosyltransferase 48 kDa subunit.